Reading from the N-terminus, the 283-residue chain is 4-diphosphocytidyl-2-C-methyl-D-erythritol kinase (283 aa).

Residue Lys11 is part of the active site. Position 94 to 104 (94 to 104 (PVAAGLAGGSA)) interacts with ATP. Residue Asp136 is part of the active site.

This sequence belongs to the GHMP kinase family. IspE subfamily.

The catalysed reaction is 4-CDP-2-C-methyl-D-erythritol + ATP = 4-CDP-2-C-methyl-D-erythritol 2-phosphate + ADP + H(+). The protein operates within isoprenoid biosynthesis; isopentenyl diphosphate biosynthesis via DXP pathway; isopentenyl diphosphate from 1-deoxy-D-xylulose 5-phosphate: step 3/6. Functionally, catalyzes the phosphorylation of the position 2 hydroxy group of 4-diphosphocytidyl-2C-methyl-D-erythritol. This is 4-diphosphocytidyl-2-C-methyl-D-erythritol kinase from Acetivibrio thermocellus (strain ATCC 27405 / DSM 1237 / JCM 9322 / NBRC 103400 / NCIMB 10682 / NRRL B-4536 / VPI 7372) (Clostridium thermocellum).